We begin with the raw amino-acid sequence, 243 residues long: Killer cell lectin-like receptor subfamily I member 1 (243 aa).

The Cytoplasmic segment spans residues 1–80; the sequence is MPHSKHRDYT…RQGPKSAVWR (80 aa). 2 consecutive short sequence motifs (ITIM motif) follow at residues 16-21 and 47-52; these read IPYTEL and LKYAEL. A helical; Signal-anchor for type II membrane protein transmembrane segment spans residues 81 to 101; that stretch reads VVTCVLGVLCVVLMITMGILV. The Extracellular portion of the chain corresponds to 102–243; sequence PKLFSGQEEQ…KPYACEFNKM (142 aa). Residues asparagine 123, asparagine 191, asparagine 194, asparagine 200, and asparagine 214 are each glycosylated (N-linked (GlcNAc...) asparagine). A C-type lectin domain is found at 137 to 239; it reads FGNNFYLFFR…CSSKKPYACE (103 aa). 2 disulfide bridges follow: cysteine 158-cysteine 238 and cysteine 217-cysteine 230.

As to quaternary structure, heterodimer with KLRE1. Interacts with PTPN6. In terms of tissue distribution, expressed in natural killer (NK) cells.

It localises to the cell membrane. Functionally, lectin-like receptor for natural killer (NK) cells. Heterodimer formation with KLRE1 mediates inhibition of NK cell cytolytic activity. This Rattus norvegicus (Rat) protein is Killer cell lectin-like receptor subfamily I member 1.